The sequence spans 240 residues: Coiled-coil domain-containing protein 152 (240 aa).

Positions 55-223 (MQTKEVAMKQ…LEQRLSVSKD (169 aa)) form a coiled coil.

In Bos taurus (Bovine), this protein is Coiled-coil domain-containing protein 152 (CCDC152).